The primary structure comprises 61 residues: Conotoxin Vn5.3 (61 aa).

The first 19 residues, 1 to 19 (MHCLPVFVILLLLIASAPG), serve as a signal peptide directing secretion. Residues 20–50 (VDVQPKTKNFMTRASLRDFAKKTPKRLSKLR) constitute a propeptide that is removed on maturation.

Belongs to the conotoxin T superfamily. In terms of processing, contains 2 disulfide bonds that can be either 'C1-C3, C2-C4' or 'C1-C4, C2-C3', since these disulfide connectivities have been observed for conotoxins with cysteine framework V (for examples, see AC P0DQQ7 and AC P81755). As to expression, expressed by the venom duct.

It is found in the secreted. The protein is Conotoxin Vn5.3 of Conus ventricosus (Mediterranean cone).